Reading from the N-terminus, the 275-residue chain is Large ribosomal subunit protein uL2 (275 aa).

Residues 212–275 (NRHRGIRPQT…DKLIISRRKK (64 aa)) are disordered. The span at 257 to 275 (YKTRRKKPSDKLIISRRKK) shows a compositional bias: basic residues.

This sequence belongs to the universal ribosomal protein uL2 family. As to quaternary structure, part of the 50S ribosomal subunit. Forms a bridge to the 30S subunit in the 70S ribosome.

In terms of biological role, one of the primary rRNA binding proteins. Required for association of the 30S and 50S subunits to form the 70S ribosome, for tRNA binding and peptide bond formation. It has been suggested to have peptidyltransferase activity; this is somewhat controversial. Makes several contacts with the 16S rRNA in the 70S ribosome. In Nitratiruptor sp. (strain SB155-2), this protein is Large ribosomal subunit protein uL2.